Here is a 637-residue protein sequence, read N- to C-terminus: Threonine--tRNA ligase (637 aa).

In terms of domain architecture, TGS spans 1–61 (MIKISLKNGK…NKDCKVEILT (61 aa)). Residues 242–532 (DHRKLGKELD…LIEHYAGAFP (291 aa)) are catalytic. The Zn(2+) site is built by C333, H384, and H509.

The protein belongs to the class-II aminoacyl-tRNA synthetase family. As to quaternary structure, homodimer. Zn(2+) is required as a cofactor.

It localises to the cytoplasm. The catalysed reaction is tRNA(Thr) + L-threonine + ATP = L-threonyl-tRNA(Thr) + AMP + diphosphate + H(+). Functionally, catalyzes the attachment of threonine to tRNA(Thr) in a two-step reaction: L-threonine is first activated by ATP to form Thr-AMP and then transferred to the acceptor end of tRNA(Thr). Also edits incorrectly charged L-seryl-tRNA(Thr). This is Threonine--tRNA ligase from Clostridium kluyveri (strain NBRC 12016).